The sequence spans 213 residues: ATP phosphoribosyltransferase (213 aa).

The protein belongs to the ATP phosphoribosyltransferase family. Short subfamily. Heteromultimer composed of HisG and HisZ subunits.

It localises to the cytoplasm. The catalysed reaction is 1-(5-phospho-beta-D-ribosyl)-ATP + diphosphate = 5-phospho-alpha-D-ribose 1-diphosphate + ATP. Its pathway is amino-acid biosynthesis; L-histidine biosynthesis; L-histidine from 5-phospho-alpha-D-ribose 1-diphosphate: step 1/9. Functionally, catalyzes the condensation of ATP and 5-phosphoribose 1-diphosphate to form N'-(5'-phosphoribosyl)-ATP (PR-ATP). Has a crucial role in the pathway because the rate of histidine biosynthesis seems to be controlled primarily by regulation of HisG enzymatic activity. This is ATP phosphoribosyltransferase from Teredinibacter turnerae (strain ATCC 39867 / T7901).